The primary structure comprises 286 residues: Pyridoxine 4-dehydrogenase (286 aa).

Residue Y59 is the Proton donor of the active site. 210–218 is an NADP(+) binding site; that stretch reads FPLGGFTPL.

Belongs to the aldo/keto reductase family. Aldo/keto reductase 2 subfamily.

It catalyses the reaction pyridoxine + NADP(+) = pyridoxal + NADPH + H(+). The enzyme catalyses pyridoxine + NAD(+) = pyridoxal + NADH + H(+). Catalyzes the NAD(P)H-dependent reduction of pyridoxal to pyridoxine in vitro. Is not able to reduce 4-pyridoxate, and to oxidize pyridoxine or pyridoxamine. Has Kemp eliminase activity towards the non-physiological substrate 5-nitrobenzisoxazole, producing 4-nitro-2-cyanophenol; this activity is not considered to be physiologically relevant. The protein is Pyridoxine 4-dehydrogenase of Escherichia coli (strain K12).